Here is a 96-residue protein sequence, read N- to C-terminus: Small ribosomal subunit protein uS19 (96 aa).

The protein belongs to the universal ribosomal protein uS19 family.

Its function is as follows. Protein S19 forms a complex with S13 that binds strongly to the 16S ribosomal RNA. This Solibacter usitatus (strain Ellin6076) protein is Small ribosomal subunit protein uS19.